The chain runs to 740 residues: MSSAVRIVEKQLDEILAIARNPAQIRNAGTLAHVDHGKTTTTDSLLMGAGLLSPKVAGKALAMDYVPIEQLRQMTVKAANISLYFEYGGKPYLINFVDTPGHVDFTGHVTRSLRVMDGGLVVVDAVEGVMTQTETVVRQALEEYVRPVLFINKIDRLIKELRLSPQEIQQRILSIVKDFNALIDMFAPPEFKDKWKIDPGKGQMAMGSALHKWGITIPMAQKAGIKFSNIVDAYEKGYVDKLAEEFPLYKTLLTMIIEHVPPPNVAQKYRIPRLWRGDLNSEVGKALLEADPNGPTVIAVSKVNKDPHAGLIATGRVFSGTIREGDEIYIIGRKMKKKVLQTYIYMGPTRIIVPYMPAGNIVALMGVDEARAGDTLVTPSLADIPPFERMRYISEPVVTVAIEPKNPAELARLVEALKDLVIEDPTLDLKIDQETGQILLSGVGTLHLEIATWLLKERTKVEFSVSPPLIRFRETVRERSQVWEGKSPNKHNRLYFYVEPLDETTVELIATREITEEQDPRERAKILREKAGWDTDEARGVWAIDDRYFNVIVDKTTGIQYLREIRDYIIQGFRWAMEAGPLAQEPIRGVKVVLVDAVVHEDPAHRGPAQIMPATKNAIFAAFLSARPTILEPLVRLDIKVAPDYIGAVTSVINKHRGKILDMTQQEYMAFLRAELPVLESFTISDELRAAAAGKIFWSMQFSRWAPYPESMLADFVKQLRKKKGLKEEIPKPTDFVEAF.

Residues 23–264 (AQIRNAGTLA…MIIEHVPPPN (242 aa)) enclose the tr-type G domain. GTP-binding positions include 32–39 (AHVDHGKT), 98–102 (DTPGH), and 152–155 (NKID). A Diphthamide modification is found at His605.

Belongs to the TRAFAC class translation factor GTPase superfamily. Classic translation factor GTPase family. EF-G/EF-2 subfamily.

It localises to the cytoplasm. Functionally, catalyzes the GTP-dependent ribosomal translocation step during translation elongation. During this step, the ribosome changes from the pre-translocational (PRE) to the post-translocational (POST) state as the newly formed A-site-bound peptidyl-tRNA and P-site-bound deacylated tRNA move to the P and E sites, respectively. Catalyzes the coordinated movement of the two tRNA molecules, the mRNA and conformational changes in the ribosome. The sequence is that of Elongation factor 2 from Pyrobaculum calidifontis (strain DSM 21063 / JCM 11548 / VA1).